A 337-amino-acid chain; its full sequence is Casein kinase I isoform alpha (337 aa).

A Protein kinase domain is found at 17 to 285 (YKLVRKIGSG…YLRQLFRILF (269 aa)). ATP is bound by residues 23 to 31 (IGSGSFGDI) and K46. D136 serves as the catalytic Proton acceptor. Over residues 309-325 (AASSSGQGQQAQTPTGK) the composition is skewed to low complexity. Residues 309–337 (AASSSGQGQQAQTPTGKQTDKSKSNMKGF) are disordered.

This sequence belongs to the protein kinase superfamily. CK1 Ser/Thr protein kinase family. Casein kinase I subfamily. In terms of processing, autophosphorylated.

It is found in the cytoplasm. Its subcellular location is the cytoskeleton. The protein localises to the microtubule organizing center. The protein resides in the centrosome. It localises to the chromosome. It is found in the centromere. Its subcellular location is the kinetochore. The protein localises to the nucleus speckle. The protein resides in the cilium basal body. It localises to the spindle. The catalysed reaction is L-seryl-[protein] + ATP = O-phospho-L-seryl-[protein] + ADP + H(+). It catalyses the reaction L-threonyl-[protein] + ATP = O-phospho-L-threonyl-[protein] + ADP + H(+). In terms of biological role, casein kinases are operationally defined by their preferential utilization of acidic proteins such as caseins as substrates. It can phosphorylate a large number of proteins. Participates in Wnt signaling. May play a role in segregating chromosomes during mitosis. May play a role in keratin cytoskeleton disassembly. This chain is Casein kinase I isoform alpha (CSNK1A1), found in Gallus gallus (Chicken).